The following is a 249-amino-acid chain: Vesicle-associated membrane protein-associated protein A (249 aa).

Ala-2 carries the N-acetylalanine modification. Residues 2–227 (ASASGAMAKH…VSFRDNVTSP (226 aa)) are Cytoplasmic-facing. The MSP domain occupies 14 to 131 (ILVLDPPSDL…MDSKLRCVFE (118 aa)). Positions 50–53 (KVKT) are phosphorylated FFAT motif binding. Lys-125 carries the N6-acetyllysine modification. Over residues 135–144 (ENDKLNDMEP) the composition is skewed to basic and acidic residues. Residues 135-166 (ENDKLNDMEPSKAVPLNASKQDGPLPKPHSVS) are disordered. Residue Ser-166 is modified to Phosphoserine. Positions 168–207 (NDTETRKLMEECKRLQGEMMKLSEENRHLRDEGLRLRKVA) form a coiled coil. Thr-170 carries the phosphothreonine modification. Residues Ser-214, Ser-216, and Ser-219 each carry the phosphoserine modification. A helical; Anchor for type IV membrane protein membrane pass occupies residues 228–248 (LPSLLVVIAAIFIGFFLGKFI).

This sequence belongs to the VAMP-associated protein (VAP) (TC 9.B.17) family. In terms of assembly, homodimer; disulfide-linked. Heterodimer with VAPB. Interacts with VAMP1, VAMP2, STX1A, BET1, SEC22C and with the C-terminal domain of OCLN. Interacts (via MSP domain) with OSBPL1A (via FFAT motif). Interacts (via MSP domain) with ZFYVE27; may retain ZFYVE27 in the endoplasmic reticulum and regulate its function in cell projections formation. Interacts with OSBP. Interacts (via C-terminus) with RSAD2/viperin (via C-terminus). Interacts with IFITM3. Interacts with OSBPL3 (phosphorylated form). Interacts with KIF5A in a ZFYVE27-dependent manner. Interacts (via MSP domain) with STARD3 (via phosphorylated FFAT motif); this interaction recruits VAPA to the endosome. Interacts with STARD3NL (via FFAT motif). Interacts with CERT1. Interacts with PLEKHA3 and SACM1L to form a ternary complex. Interacts with VPS13A (via FFAT motif). Interacts with RB1CC1 (via phosphorylated FFAT motif), MIGA2 (via phosphorylated FFAT motif), RMDN3 (via phosphorylated FFAT motif), KCNB1 (via phosphorylated FFAT motif) and KCNB2 (via phosphorylated FFAT motif). Interacts (via MSP domain) with WDR44; the interactions connect the endoplasmic reticulum (ER) with the endosomal tubule. In terms of tissue distribution, ubiquitous.

The protein localises to the endoplasmic reticulum membrane. It localises to the cell membrane. It is found in the cell junction. The protein resides in the tight junction. Its subcellular location is the nucleus membrane. Functionally, endoplasmic reticulum (ER)-anchored protein that mediates the formation of contact sites between the ER and endosomes via interaction with FFAT motif-containing proteins such as STARD3 or WDR44. STARD3-VAPA interaction enables cholesterol transfer from the ER to endosomes. Via interaction with WDR44 participates in neosynthesized protein export. In addition, recruited to the plasma membrane through OSBPL3 binding. The OSBPL3-VAPA complex stimulates RRAS signaling which in turn attenuates integrin beta-1 (ITGB1) activation at the cell surface. With OSBPL3, may regulate ER morphology. May play a role in vesicle trafficking. The sequence is that of Vesicle-associated membrane protein-associated protein A from Rattus norvegicus (Rat).